Here is a 177-residue protein sequence, read N- to C-terminus: Alkyl hydroperoxide reductase AhpD (177 aa).

C131 serves as the catalytic Proton donor. C131 and C134 form a disulfide bridge. The active-site Cysteine sulfenic acid (-SOH) intermediate is the C134.

The protein belongs to the AhpD family. In terms of assembly, homotrimer.

It catalyses the reaction N(6)-[(R)-dihydrolipoyl]-L-lysyl-[lipoyl-carrier protein] + a hydroperoxide = N(6)-[(R)-lipoyl]-L-lysyl-[lipoyl-carrier protein] + an alcohol + H2O. Functionally, antioxidant protein with alkyl hydroperoxidase activity. Required for the reduction of the AhpC active site cysteine residues and for the regeneration of the AhpC enzyme activity. This is Alkyl hydroperoxide reductase AhpD from Streptomyces griseus subsp. griseus (strain JCM 4626 / CBS 651.72 / NBRC 13350 / KCC S-0626 / ISP 5235).